The chain runs to 230 residues: uncharacterized protein (230 aa).

The a divalent metal cation site is built by Glu-74, Glu-76, and Asp-105.

This sequence belongs to the FAH family.

This is an uncharacterized protein from Pyrococcus horikoshii (strain ATCC 700860 / DSM 12428 / JCM 9974 / NBRC 100139 / OT-3).